The following is a 471-amino-acid chain: Iroquois-class homeodomain protein IRX-2 (471 aa).

Residues 112-175 (LNDPAYRKNA…ANARRRLKKE (64 aa)) constitute a DNA-binding region (homeobox; TALE-type). Disordered regions lie at residues 176–373 (NKMT…SPYP) and 424–471 (APKA…QPYL). S186 bears the Phosphoserine mark. The segment covering 195–209 (DATRSKDESPDKAQE) has biased composition (basic and acidic residues). Acidic residues predominate over residues 261–273 (DDLEDDEDDDEEG). The segment covering 355–367 (PAAAAPASTGAPP) has biased composition (low complexity). Over residues 462 to 471 (VVGGGVQPYL) the composition is skewed to gly residues.

Belongs to the TALE/IRO homeobox family.

It localises to the nucleus. The sequence is that of Iroquois-class homeodomain protein IRX-2 (IRX2) from Homo sapiens (Human).